The primary structure comprises 87 residues: uncharacterized protein (87 aa).

The helical transmembrane segment at 44 to 64 (DALYLAGSTIFTIVTTLVAWF) threads the bilayer.

The protein belongs to the SPP1 holin family.

It localises to the membrane. This is an uncharacterized protein from Bacillus licheniformis.